A 355-amino-acid chain; its full sequence is Phospho-N-acetylmuramoyl-pentapeptide-transferase (355 aa).

Helical transmembrane passes span 3–23 (GVLI…PWVI), 56–76 (VIIV…GIGF), 80–100 (GLLV…DDYI), 120–140 (AAVA…AGLL), 152–172 (TSLT…IAAT), 185–205 (LAAG…FWQF), 224–244 (PLDV…FLWW), 251–271 (IFMG…IAIV), 276–296 (LLLV…MIQV), and 330–350 (FWIV…AEFL).

This sequence belongs to the glycosyltransferase 4 family. MraY subfamily. Requires Mg(2+) as cofactor.

It is found in the cell membrane. It catalyses the reaction UDP-N-acetyl-alpha-D-muramoyl-L-alanyl-gamma-D-glutamyl-meso-2,6-diaminopimeloyl-D-alanyl-D-alanine + di-trans,octa-cis-undecaprenyl phosphate = di-trans,octa-cis-undecaprenyl diphospho-N-acetyl-alpha-D-muramoyl-L-alanyl-D-glutamyl-meso-2,6-diaminopimeloyl-D-alanyl-D-alanine + UMP. It functions in the pathway cell wall biogenesis; peptidoglycan biosynthesis. Catalyzes the initial step of the lipid cycle reactions in the biosynthesis of the cell wall peptidoglycan: transfers peptidoglycan precursor phospho-MurNAc-pentapeptide from UDP-MurNAc-pentapeptide onto the lipid carrier undecaprenyl phosphate, yielding undecaprenyl-pyrophosphoryl-MurNAc-pentapeptide, known as lipid I. This is Phospho-N-acetylmuramoyl-pentapeptide-transferase from Frankia alni (strain DSM 45986 / CECT 9034 / ACN14a).